The sequence spans 531 residues: Peptide chain release factor 3 (531 aa).

Residues 13 to 282 (SKRRTFAIIS…GLTQWAPSPM (270 aa)) enclose the tr-type G domain. GTP is bound by residues 22-29 (SHPDAGKT), 90-94 (DTPGH), and 144-147 (NKLD).

This sequence belongs to the TRAFAC class translation factor GTPase superfamily. Classic translation factor GTPase family. PrfC subfamily.

The protein localises to the cytoplasm. Functionally, increases the formation of ribosomal termination complexes and stimulates activities of RF-1 and RF-2. It binds guanine nucleotides and has strong preference for UGA stop codons. It may interact directly with the ribosome. The stimulation of RF-1 and RF-2 is significantly reduced by GTP and GDP, but not by GMP. This Vibrio cholerae serotype O1 (strain ATCC 39541 / Classical Ogawa 395 / O395) protein is Peptide chain release factor 3.